Here is a 137-residue protein sequence, read N- to C-terminus: Large-conductance mechanosensitive channel (137 aa).

A run of 2 helical transmembrane segments spans residues 9–29 (AFAV…GAAF) and 79–99 (IQSV…VKAI).

It belongs to the MscL family. In terms of assembly, homopentamer.

It is found in the cell inner membrane. Its function is as follows. Channel that opens in response to stretch forces in the membrane lipid bilayer. May participate in the regulation of osmotic pressure changes within the cell. The chain is Large-conductance mechanosensitive channel from Pseudomonas fluorescens (strain Pf0-1).